The sequence spans 148 residues: Deoxyuridine 5'-triphosphate nucleotidohydrolase (148 aa).

Substrate-binding positions include 68–70 (RSG), Asn-81, 85–87 (TID), and Lys-95.

This sequence belongs to the dUTPase family. It depends on Mg(2+) as a cofactor.

The enzyme catalyses dUTP + H2O = dUMP + diphosphate + H(+). Its pathway is pyrimidine metabolism; dUMP biosynthesis; dUMP from dCTP (dUTP route): step 2/2. This enzyme is involved in nucleotide metabolism: it produces dUMP, the immediate precursor of thymidine nucleotides and it decreases the intracellular concentration of dUTP so that uracil cannot be incorporated into DNA. This Rickettsia massiliae (strain Mtu5) protein is Deoxyuridine 5'-triphosphate nucleotidohydrolase.